Consider the following 522-residue polypeptide: Cytochrome P450 monooxygenase AKT7 (522 aa).

Residues 10–30 (LYVTCTVLAALILGYIQAMII) form a helical membrane-spanning segment. Position 452 (Cys-452) interacts with heme.

The protein belongs to the cytochrome P450 family. The cofactor is heme.

It is found in the membrane. The protein operates within mycotoxin biosynthesis. Cytochrome P450 monooxygenase; part of the gene clusters that mediate the biosynthesis of the host-selective toxins (HSTs) AK-toxins responsible for Japanese pear black spot disease by the Japanese pear pathotype. AK-toxins are esters of 9,10-epoxy 8-hydroxy 9-methyldecatrienoic acid (EDA). On cellular level, AK-toxins affect plasma membrane of susceptible cells and cause a sudden increase in loss of K(+) after a few minutes of toxin treatment. The acyl-CoA ligase AKT1, the hydrolase AKT2 and enoyl-CoA hydratase AKT3 are all involved in the biosynthesis of the AK-, AF- and ACT-toxin common 9,10-epoxy-8-hydroxy-9-methyl-decatrienoic acid (EDA) structural moiety. Part of the EDA biosynthesis occurs in the peroxisome since these 3 enzymes are localized in peroxisomes. The exact roles of the 3 enzymes, as well as of additional AK-toxin clusters enzymes, including AKT4, AKT6 and AKTS1, have still to be elucidated. The Cytochrome P450 monooxygenase AKT7 on the other side functions to limit production of EDA and AK-toxin, probably via the catalysis of a side reaction of EDA or its precursor. The sequence is that of Cytochrome P450 monooxygenase AKT7 from Alternaria alternata (Alternaria rot fungus).